Here is a 297-residue protein sequence, read N- to C-terminus: SH2 domain-containing protein 6 (297 aa).

2 disordered regions span residues 1–61 and 74–93; these read MSCP…FPTR and MNPQ…RGTS. The span at 36 to 45 shows a compositional bias: pro residues; that stretch reads PSKPPLPPPQ. One can recognise an SH2 domain in the interval 187–295; sequence WYSGNCDRQS…RGLTYLRFPT (109 aa).

This Mus musculus (Mouse) protein is SH2 domain-containing protein 6 (Sh2d6).